Here is a 161-residue protein sequence, read N- to C-terminus: Transcription elongation factor GreB (161 aa).

Belongs to the GreA/GreB family. GreB subfamily.

Necessary for efficient RNA polymerase transcription elongation past template-encoded arresting sites. The arresting sites in DNA have the property of trapping a certain fraction of elongating RNA polymerases that pass through, resulting in locked ternary complexes. Cleavage of the nascent transcript by cleavage factors such as GreA or GreB allows the resumption of elongation from the new 3'terminus. GreB releases sequences of up to 9 nucleotides in length. The polypeptide is Transcription elongation factor GreB (Vibrio cholerae serotype O1 (strain ATCC 39315 / El Tor Inaba N16961)).